The sequence spans 341 residues: S-adenosylmethionine:tRNA ribosyltransferase-isomerase (341 aa).

This sequence belongs to the QueA family. As to quaternary structure, monomer.

The protein resides in the cytoplasm. It carries out the reaction 7-aminomethyl-7-carbaguanosine(34) in tRNA + S-adenosyl-L-methionine = epoxyqueuosine(34) in tRNA + adenine + L-methionine + 2 H(+). It functions in the pathway tRNA modification; tRNA-queuosine biosynthesis. Functionally, transfers and isomerizes the ribose moiety from AdoMet to the 7-aminomethyl group of 7-deazaguanine (preQ1-tRNA) to give epoxyqueuosine (oQ-tRNA). This is S-adenosylmethionine:tRNA ribosyltransferase-isomerase from Chlorobium phaeobacteroides (strain DSM 266 / SMG 266 / 2430).